The primary structure comprises 97 residues: Protein RnfH (97 aa).

This sequence belongs to the UPF0125 (RnfH) family.

This is Protein RnfH from Proteus mirabilis (strain HI4320).